A 181-amino-acid chain; its full sequence is 28 kDa heat- and acid-stable phosphoprotein (181 aa).

The span at 1-14 (MPKGGRKGGHKGRA) shows a compositional bias: basic residues. The disordered stretch occupies residues 1-117 (MPKGGRKGGH…SRREREEIEK (117 aa)). Threonine 18 is subject to Phosphothreonine. Serine 19 is subject to Phosphoserine. Over residues 30-59 (EKQKAREEEEQKEGGDGAAGDPKKEKKSLD) the composition is skewed to basic and acidic residues. Residue lysine 52 forms a Glycyl lysine isopeptide (Lys-Gly) (interchain with G-Cter in SUMO2) linkage. Serine 57, serine 60, and serine 63 each carry phosphoserine. The segment covering 60 to 69 (SDESEDEEDD) has biased composition (acidic residues). Tyrosine 70 carries the post-translational modification Phosphotyrosine. The span at 102 to 117 (DGPKELSRREREEIEK) shows a compositional bias: basic and acidic residues. N6-methyllysine is present on lysine 126. N6-acetyllysine occurs at positions 132 and 164. The span at 151 to 167 (EEAARKKEEERKAKDDA) shows a compositional bias: basic and acidic residues. Residues 151-181 (EEAARKKEEERKAKDDATLSGKRMQSLSLNK) are disordered. Residues serine 176 and serine 178 each carry the phosphoserine modification.

This sequence belongs to the PDAP1 family.

In terms of biological role, enhances PDGFA-stimulated cell growth in fibroblasts, but inhibits the mitogenic effect of PDGFB. The sequence is that of 28 kDa heat- and acid-stable phosphoprotein (PDAP1) from Homo sapiens (Human).